Reading from the N-terminus, the 699-residue chain is Polyribonucleotide nucleotidyltransferase (699 aa).

Residues aspartate 485 and aspartate 491 each contribute to the Mg(2+) site. Positions proline 552–isoleucine 611 constitute a KH domain. Positions glycine 621–lysine 689 constitute an S1 motif domain.

It belongs to the polyribonucleotide nucleotidyltransferase family. Component of the RNA degradosome, which is a multiprotein complex involved in RNA processing and mRNA degradation. The cofactor is Mg(2+).

Its subcellular location is the cytoplasm. It catalyses the reaction RNA(n+1) + phosphate = RNA(n) + a ribonucleoside 5'-diphosphate. In terms of biological role, involved in mRNA degradation. Catalyzes the phosphorolysis of single-stranded polyribonucleotides processively in the 3'- to 5'-direction. The protein is Polyribonucleotide nucleotidyltransferase of Shewanella amazonensis (strain ATCC BAA-1098 / SB2B).